The chain runs to 611 residues: Elongation factor 4 (611 aa).

The tr-type G domain maps to 11 to 193 (KHIRNFSIVA…KIVKDVPAPT (183 aa)). GTP is bound by residues 23-28 (DHGKST) and 140-143 (NKID).

The protein belongs to the TRAFAC class translation factor GTPase superfamily. Classic translation factor GTPase family. LepA subfamily.

Its subcellular location is the cell membrane. It carries out the reaction GTP + H2O = GDP + phosphate + H(+). Required for accurate and efficient protein synthesis under certain stress conditions. May act as a fidelity factor of the translation reaction, by catalyzing a one-codon backward translocation of tRNAs on improperly translocated ribosomes. Back-translocation proceeds from a post-translocation (POST) complex to a pre-translocation (PRE) complex, thus giving elongation factor G a second chance to translocate the tRNAs correctly. Binds to ribosomes in a GTP-dependent manner. The polypeptide is Elongation factor 4 (Limosilactobacillus reuteri (strain DSM 20016) (Lactobacillus reuteri)).